A 706-amino-acid chain; its full sequence is ABC transporter D family member 2, chloroplastic (706 aa).

Residues 1-44 (MILMITAPVCPPHLLLRHSSLLRHESSIGNFHRKKNPRFRTVSC) constitute a chloroplast transit peptide. Residue Ser-45 is modified to N-acetylserine. 5 consecutive transmembrane segments (helical) span residues 88 to 108 (LAAVFALTLATTGISVGFNFL), 124 to 144 (FTKQLFYYLCAFAGGIPFFVL), 200 to 222 (TALSFSLTLVNATIDLISFSNIL), 237 to 257 (SFGGTAISVFLGKGLVNLNFL), and 326 to 346 (ILPVAVVAPMYFSGKIEFGVI). Residues 88 to 372 (LAAVFALTLA…VVYQFQAISS (285 aa)) enclose the ABC transmembrane type-1 domain. Residues 430–697 (LEIEELTLQT…DAQDSLYGRL (268 aa)) form the ABC transporter domain. 464–471 (GPSGSGKT) serves as a coordination point for ATP. The interval 545–569 (TTPGGSNIDGSPPLLIREDGNEKPT) is disordered. The segment covering 560–569 (IREDGNEKPT) has biased composition (basic and acidic residues).

This sequence belongs to the ABC transporter superfamily. ABCD family. Peroxisomal fatty acyl CoA transporter (TC 3.A.1.203) subfamily. In terms of assembly, homodimer or heterodimer.

The protein resides in the membrane. The protein localises to the plastid. It is found in the chloroplast. This is ABC transporter D family member 2, chloroplastic (ABCC2) from Arabidopsis thaliana (Mouse-ear cress).